Consider the following 405-residue polypeptide: uncharacterized protein (405 aa).

12 helical membrane-spanning segments follow: residues 19–39 (ILSI…PLAV), 47–67 (VMGF…FATL), 85–105 (IVVF…TAGL), 129–149 (SFAG…LHIG), 157–177 (IVTY…YHWG), 178–198 (GLQA…LLAI), 224–244 (GMAL…ITLF), 252–272 (GAAF…LLFP), 283–303 (VAMI…VATM), 309–329 (IGVL…GVVA), 344–364 (TYTV…GLVM), and 366–386 (WAGV…ALLL).

Belongs to the major facilitator superfamily. YhhS family.

It localises to the cell inner membrane. This is an uncharacterized protein from Escherichia coli O157:H7.